A 171-amino-acid chain; its full sequence is Adenine phosphoribosyltransferase (171 aa).

The protein belongs to the purine/pyrimidine phosphoribosyltransferase family. As to quaternary structure, homodimer.

The protein resides in the cytoplasm. It catalyses the reaction AMP + diphosphate = 5-phospho-alpha-D-ribose 1-diphosphate + adenine. Its pathway is purine metabolism; AMP biosynthesis via salvage pathway; AMP from adenine: step 1/1. Functionally, catalyzes a salvage reaction resulting in the formation of AMP, that is energically less costly than de novo synthesis. The sequence is that of Adenine phosphoribosyltransferase from Mycoplasma mobile (strain ATCC 43663 / 163K / NCTC 11711) (Mesomycoplasma mobile).